A 372-amino-acid polypeptide reads, in one-letter code: Probable E3 ubiquitin-protein ligase makorin-1 (372 aa).

2 C3H1-type zinc fingers span residues 20-45 and 48-75; these read KHVT…HDLT and KPAA…HCKP. Positions 78–110 are disordered; it reads NEEFSSPQMLPPSSPSPSTDPESSQPAPRPKTQ. Over residues 93-103 the composition is skewed to low complexity; that stretch reads SPSTDPESSQP. The C3H1-type 3 zinc finger occupies 153–180; the sequence is ALRKQLCPYAAVGECRYGINCAYLHGDV. A makorin-type Cys-His region spans residues 181-208; the sequence is CDMCGLQVLHPTDNSQRSQHTKACIEAH. The RING-type zinc-finger motif lies at 226–280; sequence CGVCMEVVFEKANPSERRFGILSNCNHCYCLKCIRKWRSAKQFESKIIKSCPECR. The C3H1-type 4 zinc-finger motif lies at 309-338; sequence GMGRKPCRYFDEGRGICPFGANCFYKHAFP.

The catalysed reaction is S-ubiquitinyl-[E2 ubiquitin-conjugating enzyme]-L-cysteine + [acceptor protein]-L-lysine = [E2 ubiquitin-conjugating enzyme]-L-cysteine + N(6)-ubiquitinyl-[acceptor protein]-L-lysine.. It functions in the pathway protein modification; protein ubiquitination. Its function is as follows. E3 ubiquitin ligase catalyzing the covalent attachment of ubiquitin moieties onto substrate proteins. This chain is Probable E3 ubiquitin-protein ligase makorin-1, found in Tetraodon nigroviridis (Spotted green pufferfish).